We begin with the raw amino-acid sequence, 497 residues long: NADH-quinone oxidoreductase subunit N (497 aa).

A run of 14 helical transmembrane segments spans residues 14-34, 45-65, 86-106, 116-136, 137-157, 171-191, 215-235, 253-273, 281-301, 309-329, 338-358, 385-405, 420-439, and 461-481; these read LMAMLPILIVAGTVVLLMLSI, SLTVIGLNCALFSLYTVWGLF, IFYSGLVILASLATCTFAYPW, EFYLLLLISTLGALVLVSAQH, LAAVFLGIELIALPLFGLLGY, YFVLSAAASSFLLFGMAMLYA, ILAGMGMILVGFGFKLSLVPF, FLGTVGKIALLAGVMRFFLYV, LNTALSFMAVASIFFGNLMAL, LLGYSSIAHFGYLMIGLIALH, VAVYIVAYLFSSLGVLGVVSL, AAVMTIMLLSLAGIPMTLGFI, WVLTATVVIGSAIALYYYLR, and AFTAGGIVVWISALLVLVFGI.

The protein belongs to the complex I subunit 2 family. In terms of assembly, NDH-1 is composed of 13 different subunits. Subunits NuoA, H, J, K, L, M, N constitute the membrane sector of the complex.

Its subcellular location is the cell membrane. It carries out the reaction a quinone + NADH + 5 H(+)(in) = a quinol + NAD(+) + 4 H(+)(out). In terms of biological role, NDH-1 shuttles electrons from NADH, via FMN and iron-sulfur (Fe-S) centers, to quinones in the respiratory chain. The immediate electron acceptor for the enzyme in this species is believed to be ubiquinone. Couples the redox reaction to proton translocation (for every two electrons transferred, four hydrogen ions are translocated across the cytoplasmic membrane), and thus conserves the redox energy in a proton gradient. The polypeptide is NADH-quinone oxidoreductase subunit N (Hamiltonella defensa subsp. Acyrthosiphon pisum (strain 5AT)).